The sequence spans 605 residues: Protein Spindly (605 aa).

M1 carries the post-translational modification N-acetylmethionine. Positions 2 to 442 form a coiled coil; that stretch reads EADIITNLRC…ELKLKYEPEE (441 aa). A phosphoserine mark is found at S513, S515, and S555. Residues 544–580 form a disordered region; that stretch reads ALSERSGNTPNSPRLAAESKLQTEVKEGKETSSKLEK. The segment covering 564–580 has biased composition (basic and acidic residues); it reads LQTEVKEGKETSSKLEK.

This sequence belongs to the Spindly family. Interacts with KNTC1 and ZW10. These interactions appear weak and may be transient or indirect. Interacts with dynein intermediate chain and dynactin (DCTN1). Interacts with the catalytically active form of USP45. Monoubiquitinated with'Lys-48' linkage. Deubiquitinated by USP45.

The protein resides in the cytoplasm. It localises to the cytoskeleton. It is found in the microtubule organizing center. Its subcellular location is the centrosome. The protein localises to the chromosome. The protein resides in the centromere. It localises to the kinetochore. It is found in the nucleus. Its subcellular location is the spindle pole. In terms of biological role, required for the localization of dynein and dynactin to the mitotic kintochore. Dynein is believed to control the initial lateral interaction between the kinetochore and spindle microtubules and to facilitate the subsequent formation of end-on kinetochore-microtubule attachments mediated by the NDC80 complex. Also required for correct spindle orientation. Does not appear to be required for the removal of spindle assembly checkpoint (SAC) proteins from the kinetochore upon bipolar spindle attachment. Acts as an adapter protein linking the dynein motor complex to various cargos and converts dynein from a non-processive to a highly processive motor in the presence of dynactin. Facilitates the interaction between dynein and dynactin and activates dynein processivity (the ability to move along a microtubule for a long distance without falling off the track). Plays a role in cell migration. This chain is Protein Spindly, found in Homo sapiens (Human).